Consider the following 334-residue polypeptide: D-alanine--D-alanine ligase (334 aa).

Residues 114–314 (KRIWRFEGLP…YEELCLRILA (201 aa)) form the ATP-grasp domain. 140–195 (LEDLGSPMIVKPSREGSTIGLTKVTSPGQCEQAYRLASRYDPEVLCEQFIEGEETT) provides a ligand contact to ATP. Mg(2+)-binding residues include Asp267, Glu281, and Asn283.

The protein belongs to the D-alanine--D-alanine ligase family. Mg(2+) is required as a cofactor. The cofactor is Mn(2+).

It is found in the cytoplasm. It catalyses the reaction 2 D-alanine + ATP = D-alanyl-D-alanine + ADP + phosphate + H(+). Its pathway is cell wall biogenesis; peptidoglycan biosynthesis. Its function is as follows. Cell wall formation. This is D-alanine--D-alanine ligase from Paracidovorax citrulli (strain AAC00-1) (Acidovorax citrulli).